The primary structure comprises 1305 residues: RNA-directed RNA polymerase (1305 aa).

Residues 563 to 814 (IIVGDLEATG…KTLIAPFSVE (252 aa)) form the RdRp catalytic domain.

Belongs to the reoviridae RNA-directed RNA polymerase family.

The enzyme catalyses RNA(n) + a ribonucleoside 5'-triphosphate = RNA(n+1) + diphosphate. The polypeptide is RNA-directed RNA polymerase (Segment-1) (African horse sickness virus (AHSV)).